An 846-amino-acid chain; its full sequence is Selenocysteine insertion sequence-binding protein 2 (846 aa).

Composition is skewed to basic and acidic residues over residues 151–165 and 206–215; these read RRAW…RRAD and PEFEFSRLDF. 5 disordered regions span residues 151 to 246, 266 to 288, 321 to 440, 448 to 467, and 475 to 613; these read RRAW…SNMS, TDHT…TREL, TTSS…VPVQ, AALE…RPVV, and VLSK…DSAT. Serine 220 bears the Phosphoserine mark. Polar residues-rich tracts occupy residues 220–232, 272–288, and 321–342; these read SPKN…TQKQ, AVTN…TREL, and TTSS…SDPS. Residues 370-380 carry the Nuclear localization signal motif; the sequence is KKNKKKKEKSK. Residues 417–428 are compositionally biased toward polar residues; the sequence is KLQSKQQAQNDF. Over residues 527 to 536 the composition is skewed to basic and acidic residues; the sequence is ILKERQERMQ. Residues 542–551 show a composition bias toward polar residues; that stretch reads SAVSPTVASD. An RNA-binding region spans residues 666 to 687; it reads LVLGLREVLKHLKLRKLKCIII. A disordered region spans residues 774–804; it reads RQEQAGEPGPQTPPSPPMQDPIQSTDEGTLA. A compositionally biased stretch (pro residues) spans 783 to 792; sequence PQTPPSPPMQ.

As to expression, ubiquitous.

The protein resides in the cytoplasm. It is found in the nucleus. Functionally, mRNA-binding protein that binds to the SECIS (selenocysteine insertion sequence) element present in the 3'-UTR of mRNAs encoding selenoproteins and facilitates the incorporation of the rare amino acid selenocysteine. Insertion of selenocysteine at UGA codons is mediated by SECISBP2 and EEFSEC: SECISBP2 (1) specifically binds the SECIS sequence once the 80S ribosome encounters an in-frame UGA codon and (2) contacts the RPS27A/eS31 of the 40S ribosome before ribosome stalling. (3) GTP-bound EEFSEC then delivers selenocysteinyl-tRNA(Sec) to the 80S ribosome and adopts a preaccommodated state conformation. (4) After GTP hydrolysis, EEFSEC dissociates from the assembly, selenocysteinyl-tRNA(Sec) accommodates, and peptide bond synthesis and selenoprotein elongation occur. This Rattus norvegicus (Rat) protein is Selenocysteine insertion sequence-binding protein 2 (Secisbp2).